The following is a 184-amino-acid chain: GTP-dependent dephospho-CoA kinase (184 aa).

GTP is bound by residues Asp-33, Val-34, Asp-52, Lys-54, and Glu-103.

Belongs to the GTP-dependent DPCK family.

The enzyme catalyses 3'-dephospho-CoA + GTP = GDP + CoA + H(+). Its pathway is cofactor biosynthesis; coenzyme A biosynthesis. Its function is as follows. Catalyzes the GTP-dependent phosphorylation of the 3'-hydroxyl group of dephosphocoenzyme A to form coenzyme A (CoA). The sequence is that of GTP-dependent dephospho-CoA kinase from Ignicoccus hospitalis (strain KIN4/I / DSM 18386 / JCM 14125).